A 238-amino-acid polypeptide reads, in one-letter code: MNTLPVKQSQLINPIAAPEVPQELQENIILTSLNDVYSWCRLSSLWPLMYGTACCFIEFAAMIGSRFDFDRFGLVPRCSPRQADLLITAGTITMKMAPALVKLYEQMPEPKYVIAMGACTITGGMFSTDSPTAVRGVDKLIPVDIYLPGCPPRPEAIMDAIVKLRKKIGNEHLDERGQLQQTHRFHSVKHGMKSVAPILTGEYLAAPTRQAPPQQLAEALGLPLPALEAIEKEAVERN.

4 residues coordinate [4Fe-4S] cluster: C54, C55, C119, and C150.

It belongs to the complex I 20 kDa subunit family. As to quaternary structure, NDH-1 can be composed of about 15 different subunits; different subcomplexes with different compositions have been identified which probably have different functions. [4Fe-4S] cluster serves as cofactor.

Its subcellular location is the cellular thylakoid membrane. The catalysed reaction is a plastoquinone + NADH + (n+1) H(+)(in) = a plastoquinol + NAD(+) + n H(+)(out). It catalyses the reaction a plastoquinone + NADPH + (n+1) H(+)(in) = a plastoquinol + NADP(+) + n H(+)(out). NDH-1 shuttles electrons from an unknown electron donor, via FMN and iron-sulfur (Fe-S) centers, to quinones in the respiratory and/or the photosynthetic chain. The immediate electron acceptor for the enzyme in this species is believed to be plastoquinone. Couples the redox reaction to proton translocation, and thus conserves the redox energy in a proton gradient. Cyanobacterial NDH-1 also plays a role in inorganic carbon-concentration. This Cyanothece sp. (strain PCC 7425 / ATCC 29141) protein is NAD(P)H-quinone oxidoreductase subunit K 1.